The primary structure comprises 182 residues: Ribulose bisphosphate carboxylase small subunit, chloroplastic (182 aa).

The transit peptide at 1–58 directs the protein to the chloroplast; it reads MASSMLSTATVASINRVSPAQATMVAPFTGLKSTPVFPTTRKTNSDITSITSNGGKVQ.

This sequence belongs to the RuBisCO small chain family. In terms of assembly, heterohexadecamer of 8 large and 8 small subunits.

It localises to the plastid. The protein localises to the chloroplast. In terms of biological role, ruBisCO catalyzes two reactions: the carboxylation of D-ribulose 1,5-bisphosphate, the primary event in carbon dioxide fixation, as well as the oxidative fragmentation of the pentose substrate. Both reactions occur simultaneously and in competition at the same active site. Although the small subunit is not catalytic it is essential for maximal activity. This chain is Ribulose bisphosphate carboxylase small subunit, chloroplastic, found in Manihot esculenta (Cassava).